Here is a 327-residue protein sequence, read N- to C-terminus: GMP reductase (327 aa).

Catalysis depends on Cys175, which acts as the Thioimidate intermediate. 204-227 is an NADP(+) binding site; that stretch reads IIADGGIRTHGDIAKSIRFGASMV.

The protein belongs to the IMPDH/GMPR family. GuaC type 2 subfamily.

The catalysed reaction is IMP + NH4(+) + NADP(+) = GMP + NADPH + 2 H(+). Its function is as follows. Catalyzes the irreversible NADPH-dependent deamination of GMP to IMP. It functions in the conversion of nucleobase, nucleoside and nucleotide derivatives of G to A nucleotides, and in maintaining the intracellular balance of A and G nucleotides. The polypeptide is GMP reductase (Exiguobacterium sp. (strain ATCC BAA-1283 / AT1b)).